A 456-amino-acid chain; its full sequence is Enolase (456 aa).

Residue Q167 participates in (2R)-2-phosphoglycerate binding. E209 serves as the catalytic Proton donor. D250, E312, and D339 together coordinate Mg(2+). Residues K364, R393, S394, and K415 each coordinate (2R)-2-phosphoglycerate. K364 (proton acceptor) is an active-site residue.

It belongs to the enolase family. Requires Mg(2+) as cofactor.

The protein resides in the cytoplasm. The protein localises to the secreted. It is found in the cell surface. The catalysed reaction is (2R)-2-phosphoglycerate = phosphoenolpyruvate + H2O. It participates in carbohydrate degradation; glycolysis; pyruvate from D-glyceraldehyde 3-phosphate: step 4/5. In terms of biological role, catalyzes the reversible conversion of 2-phosphoglycerate (2-PG) into phosphoenolpyruvate (PEP). It is essential for the degradation of carbohydrates via glycolysis. This Mycoplasmopsis pulmonis (strain UAB CTIP) (Mycoplasma pulmonis) protein is Enolase.